We begin with the raw amino-acid sequence, 212 residues long: Glutathione S-transferase hmp2 (212 aa).

The GST N-terminal domain occupies 1-80 (MVIKLYGSAM…YLARKYDSGT (80 aa)). Glutathione is bound by residues 51-52 (KV) and 64-65 (ES). One can recognise a GST C-terminal domain in the interval 88 to 212 (DHEAYGRFEQ…TWIKATAEAR (125 aa)).

Belongs to the GST superfamily.

It carries out the reaction RX + glutathione = an S-substituted glutathione + a halide anion + H(+). Its pathway is secondary metabolite biosynthesis. Functionally, glutathione S-transferase; part of the gene cluster that mediates the biosynthesis of hypothemycin, a resorcylic acid lactone (RAL) that irreversibly inhibits a subset of protein kinases with a conserved cysteine in the ATP binding site such as human ERK2. The first step is performed by both PKSs hmp3 and hmp8 and leads to the production of 7',8'-dehydrozearalenol (DHZ). The highly reducing PKS hpm8 synthesizes the reduced hexaketide (7S,11S,2E,8E)-7,11-dihydroxy-dodeca-2,8-dienoate, which is transferred downstream to the non-reducing PKS hpm3. Hpm3 then extends the reduced hexaketide to a nonaketide, after which regioselective cyclization and macrolactonization affords DHZ. The next step is the conversion of DHZ into aigialomycin C and is performed by the O-methyltransferase hmp5, the FAD-binding monooxygenase hmp7, and the cytochrome P450 monooxygenase hmp1. The wide substrate tolerance of the hmp5 and hmp7 implies that the reactions from DHZ to aigialomycin C can occur in any order. The steps from aigialomycin C to hypothemycin are less well established. The FAD-linked oxidoreductase hmp9 presumably catalyzes oxidation of the C-6' hydroxyl to a ketone. The timing of this oxidation is important, since the resulting enone functional group is a Michael acceptor that can react spontaneously with glutathione, an abundant metabolite in fungal cells. The glutathione S-transferase hmp2 catalyzes cis-trans isomerization of the 7',8' double bond with equilibrium favoring the trans isomer. The hpm6-encoded transporter might preferentially pump hypothemycin out of the cell relative to the trans isomer aigialomycin A. The cis-to-trans isomerization may be coupled with C-4' hydroxylation, since all known hypothemycin analogs containing the enone functional group also have hydroxyl groups at both C-4' and C-5'. The protein is Glutathione S-transferase hmp2 of Hypomyces subiculosus (Nectria subiculosa).